We begin with the raw amino-acid sequence, 992 residues long: Disks large-associated protein 4 (992 aa).

Residues 1–20 (MKGLGDSRPRHLSDSLDPPH) show a composition bias toward basic and acidic residues. 2 disordered regions span residues 1-31 (MKGLGDSRPRHLSDSLDPPHEPLFAGPDRNP) and 154-226 (APSM…ASGL). Gly residues predominate over residues 162–171 (GKVGGNGGKK). Positions 172–194 (GVLEDGKGRRAKSKERAKAGEPK) are enriched in basic and acidic residues. Positions 199 to 208 (SNISGWWSSD) are enriched in polar residues. Phosphoserine is present on residues S206 and S207. At R290 the chain carries Omega-N-methylarginine. 5 disordered regions span residues 342–435 (TTLL…SWEE), 527–665 (SVSL…RKLS), 677–751 (VPKE…GPRQ), 763–798 (SYGDNSDPALEASSLPPPDPWMETSSSSPAEPAQPG), and 915–992 (TPEK…QTRL). Residues S377, S380, S384, S388, S405, S415, and S421 each carry the phosphoserine modification. Polar residues predominate over residues 399-413 (LRATQQSLGEQSNPR). Over residues 528-554 (VSLQSLSPPPSTGSLSNSRTLPSSSCL) the composition is skewed to low complexity. Over residues 576-591 (VTVQSSTESAQDTYLD) the composition is skewed to polar residues. Residues S580, S581, S609, S611, S665, and S744 each carry the phosphoserine modification. Positions 600–620 (TSQSGLSNSSDSLDSSTRPPS) are enriched in low complexity. T915 carries the phosphothreonine modification. Composition is skewed to basic and acidic residues over residues 915–925 (TPEKRKEEKKP) and 940–958 (VSRDKASDAGDKQRQEARK). Over residues 969 to 978 (VRQNSATESA) the composition is skewed to polar residues. The residue at position 973 (S973) is a Phosphoserine.

The protein belongs to the SAPAP family. Interacts with DLG1 and DLG4/PSD-95. As to expression, expressed in brain.

It localises to the membrane. In terms of biological role, may play a role in the molecular organization of synapses and neuronal cell signaling. Could be an adapter protein linking ion channel to the subsynaptic cytoskeleton. May induce enrichment of PSD-95/SAP90 at the plasma membrane. The protein is Disks large-associated protein 4 (Dlgap4) of Rattus norvegicus (Rat).